We begin with the raw amino-acid sequence, 262 residues long: 1,2-epoxyphenylacetyl-CoA isomerase (262 aa).

Belongs to the enoyl-CoA hydratase/isomerase family.

The enzyme catalyses 2-(1,2-epoxy-1,2-dihydrophenyl)acetyl-CoA = 2-oxepin-2(3H)-ylideneacetyl-CoA. Its pathway is aromatic compound metabolism; phenylacetate degradation. Functionally, catalyzes the reversible conversion of the epoxide to 2-oxepin-2(3H)-ylideneacetyl-CoA (oxepin-CoA). The chain is 1,2-epoxyphenylacetyl-CoA isomerase (paaG) from Escherichia coli (strain K12).